We begin with the raw amino-acid sequence, 84 residues long: Large ribosomal subunit protein eL34 (84 aa).

Belongs to the eukaryotic ribosomal protein eL34 family.

In Pyrobaculum aerophilum (strain ATCC 51768 / DSM 7523 / JCM 9630 / CIP 104966 / NBRC 100827 / IM2), this protein is Large ribosomal subunit protein eL34 (ribL34e).